The chain runs to 168 residues: Peptide deformylase (168 aa).

Positions 92 and 134 each coordinate Fe cation. Residue E135 is part of the active site. A Fe cation-binding site is contributed by H138.

This sequence belongs to the polypeptide deformylase family. Fe(2+) is required as a cofactor.

The enzyme catalyses N-terminal N-formyl-L-methionyl-[peptide] + H2O = N-terminal L-methionyl-[peptide] + formate. Its function is as follows. Removes the formyl group from the N-terminal Met of newly synthesized proteins. Requires at least a dipeptide for an efficient rate of reaction. N-terminal L-methionine is a prerequisite for activity but the enzyme has broad specificity at other positions. In Pseudomonas aeruginosa (strain ATCC 15692 / DSM 22644 / CIP 104116 / JCM 14847 / LMG 12228 / 1C / PRS 101 / PAO1), this protein is Peptide deformylase.